The primary structure comprises 410 residues: Chlorobenzene dioxygenase, ferredoxin reductase component (410 aa).

FAD is bound at residue 4-35 (HVAIIGNGVAGFTTAQALRAEGFEGRISLIGN). 145–173 (RLVIAGGGLIGCEVATTARKLGLAVTILE) contacts NAD(+).

It belongs to the bacterial ring-hydroxylating dioxygenase ferredoxin reductase family. As to quaternary structure, this dioxygenase system consists of four proteins: the two subunits of the oxygenase component (TecA1 and TecA2), a ferredoxin (TecA3) and a ferredoxin reductase (TecA4). FAD is required as a cofactor.

It carries out the reaction 2 reduced [2Fe-2S]-[ferredoxin] + NAD(+) + H(+) = 2 oxidized [2Fe-2S]-[ferredoxin] + NADH. It participates in aromatic compound metabolism. Part of the chlorobenzene dioxygenase system that catalyzes the dihydroxylation of a range of aromatic compounds, including chlorinated benzenes and toluenes, and dinuclear aromatics such as biphenyl and dibenzo-p-dioxin. The polypeptide is Chlorobenzene dioxygenase, ferredoxin reductase component (Cupriavidus sp. (strain PS12)).